A 212-amino-acid chain; its full sequence is Noggin-2 (212 aa).

An N-terminal signal peptide occupies residues 1–23 (MGSITRALPLLLLLLLCAHGTAS). The tract at residues 37-56 (LPVPDLIENPDPEHDPREQD) is disordered. Residues 47–56 (DPEHDPREQD) show a composition bias toward basic and acidic residues. Asn84 carries N-linked (GlcNAc...) asparagine glycosylation.

Belongs to the noggin family. In terms of assembly, homodimer; disulfide-linked.

The protein localises to the secreted. In terms of biological role, inhibitor of bone morphogenetic proteins (BMP) signaling. In Danio rerio (Zebrafish), this protein is Noggin-2 (nog2).